The sequence spans 736 residues: Segment polarity protein dishevelled homolog DVL-2 (736 aa).

The region spanning 11-93 (VGETKVIYHL…RVVSWLVSSD (83 aa)) is the DIX domain. The interval 93-255 (DTPQPEVAPP…RMERTSSFSS (163 aa)) is disordered. The segment covering 111 to 122 (VPPPPPLPPLPP) has biased composition (pro residues). The segment covering 159 to 171 (LRRDRPRRRDSSE) has biased composition (basic and acidic residues). A compositionally biased stretch (low complexity) spans 193–208 (ESSSTLMTSELESTSL). Position 211 is a phosphoserine (S211). The span at 218–230 (SRFSSSTEQSSAS) shows a compositional bias: polar residues. A compositionally biased stretch (basic residues) spans 232–244 (LLKRHRRRRKQRP). A PDZ domain is found at 267 to 339 (TVTLNMEKYN…NDDAVRVLRD (73 aa)). A DEP domain is found at 433–507 (PESGLEVRDR…SEQCYYVFGD (75 aa)). Residues 558–568 (PHPYSPQPPPY) show a composition bias toward pro residues. Positions 558–665 (PHPYSPQPPP…PNLRALPGLH (108 aa)) are disordered. Low complexity-rich tracts occupy residues 581–598 (ASSQHSEGSRSSGSTRSD) and 614–629 (SKSGSGSESELSSRGG).

Belongs to the DSH family. In terms of assembly, interacts through its PDZ domain with the C-terminal regions of VANGL1 and VANGL2. Interacts with Rac. Interacts with ARRB1; the interaction is enhanced by phosphorylation of DVL1. Can form large oligomers (via DIX domain). Interacts (via DIX domain) with DIXDC1 (via DIX domain). Interacts (via DEP domain) with AP2M1 and the AP-2 complex. Interacts with FAM105B/otulin. Interacts with DCDC2. Interacts (when phosphorylated) with FOXK1 and FOXK2; the interaction induces DVL2 nuclear translocation. Interacts with MAPK15. Interacts with PKD1 (via extracellular domain). Interacts with LMBR1L. Post-translationally, phosphorylated by CSNK1D. WNT3A induces DVL2 phosphorylation by CSNK1E and MARK kinases. In terms of processing, ubiquitinated via 'Lys-63'-linked polyubiquitin chains; leading to its autophagy-mediated degradation. As to expression, ubiquitous.

Its subcellular location is the cell membrane. It localises to the cytoplasm. The protein resides in the cytosol. The protein localises to the cytoplasmic vesicle. It is found in the nucleus. Functionally, plays a role in the signal transduction pathways mediated by multiple Wnt genes. Participates both in canonical and non-canonical Wnt signaling by binding to the cytoplasmic C-terminus of frizzled family members and transducing the Wnt signal to down-stream effectors. Promotes internalization and degradation of frizzled proteins upon Wnt signaling. In Mus musculus (Mouse), this protein is Segment polarity protein dishevelled homolog DVL-2 (Dvl2).